We begin with the raw amino-acid sequence, 274 residues long: Shikimate dehydrogenase (NADP(+)) (274 aa).

Residues 14–16 (SKS) and threonine 60 each bind shikimate. Lysine 64 (proton acceptor) is an active-site residue. An NADP(+)-binding site is contributed by glutamate 76. The shikimate site is built by asparagine 85 and aspartate 101. Residues 126 to 130 (GAGGA), 150 to 155 (NRTARK), and methionine 214 contribute to the NADP(+) site. Residue tyrosine 216 participates in shikimate binding. Glycine 238 is an NADP(+) binding site.

It belongs to the shikimate dehydrogenase family. As to quaternary structure, homodimer.

The enzyme catalyses shikimate + NADP(+) = 3-dehydroshikimate + NADPH + H(+). It participates in metabolic intermediate biosynthesis; chorismate biosynthesis; chorismate from D-erythrose 4-phosphate and phosphoenolpyruvate: step 4/7. Functionally, involved in the biosynthesis of the chorismate, which leads to the biosynthesis of aromatic amino acids. Catalyzes the reversible NADPH linked reduction of 3-dehydroshikimate (DHSA) to yield shikimate (SA). The protein is Shikimate dehydrogenase (NADP(+)) of Pseudomonas aeruginosa (strain ATCC 15692 / DSM 22644 / CIP 104116 / JCM 14847 / LMG 12228 / 1C / PRS 101 / PAO1).